Consider the following 339-residue polypeptide: Small ribosomal subunit biogenesis GTPase RsgA (339 aa).

The region spanning 111-271 (MRGLLKPVAA…LIDSPGIREF (161 aa)) is the CP-type G domain. GTP contacts are provided by residues 159 to 162 (NKAD) and 213 to 221 (GQSGVGKSS). Zn(2+)-binding residues include Cys295, Cys300, His302, and Cys308.

This sequence belongs to the TRAFAC class YlqF/YawG GTPase family. RsgA subfamily. Monomer. Associates with 30S ribosomal subunit, binds 16S rRNA. The cofactor is Zn(2+).

It localises to the cytoplasm. In terms of biological role, one of several proteins that assist in the late maturation steps of the functional core of the 30S ribosomal subunit. Helps release RbfA from mature subunits. May play a role in the assembly of ribosomal proteins into the subunit. Circularly permuted GTPase that catalyzes slow GTP hydrolysis, GTPase activity is stimulated by the 30S ribosomal subunit. This chain is Small ribosomal subunit biogenesis GTPase RsgA, found in Pseudomonas aeruginosa (strain UCBPP-PA14).